The sequence spans 259 residues: MKILISNDDGYQAPGIVALHDALKTLEGVTVQVVAPEHNNSAKSNALTLHSPLYVHQAASGFRYVNGTPADCVHIALTGLLGYRPDLVVSGINNGANMGDDTIYSGTVGAAMEGYLFGVPAIAFSQVDKGWGELEAAAAKAREIVAQLRAQNLVDPQAPWLLNVNIPNMPLTALRPIALCRLGRRHAAERVIVQQSPRGEAMYWIGGAGPAKDDAQGTDFYATAHGHVSITPLKVDLTDHDSLADWAQTAMRLAPGACI.

Residues D8, D9, S41, and N93 each coordinate a divalent metal cation.

This sequence belongs to the SurE nucleotidase family. A divalent metal cation is required as a cofactor.

It is found in the cytoplasm. The enzyme catalyses a ribonucleoside 5'-phosphate + H2O = a ribonucleoside + phosphate. Functionally, nucleotidase that shows phosphatase activity on nucleoside 5'-monophosphates. This Verminephrobacter eiseniae (strain EF01-2) protein is 5'-nucleotidase SurE.